Consider the following 160-residue polypeptide: Transmembrane protein 216 (160 aa).

Helical transmembrane passes span Trp41–Leu61, Leu68–Tyr88, Leu101–Leu121, and Ala134–Phe154.

As to quaternary structure, part of the tectonic-like complex (also named B9 complex).

Its subcellular location is the membrane. The protein resides in the cytoplasm. It is found in the cytoskeleton. The protein localises to the cilium basal body. Its function is as follows. Part of the tectonic-like complex which is required for tissue-specific ciliogenesis and may regulate ciliary membrane composition. The polypeptide is Transmembrane protein 216 (tmem216) (Danio rerio (Zebrafish)).